The following is a 270-amino-acid chain: Thiazole synthase (270 aa).

Lys111 (schiff-base intermediate with DXP) is an active-site residue. 1-deoxy-D-xylulose 5-phosphate is bound by residues Gly172, 198–199 (AG), and 220–221 (NT).

It belongs to the ThiG family. As to quaternary structure, homotetramer. Forms heterodimers with either ThiH or ThiS.

The protein localises to the cytoplasm. The catalysed reaction is [ThiS sulfur-carrier protein]-C-terminal-Gly-aminoethanethioate + 2-iminoacetate + 1-deoxy-D-xylulose 5-phosphate = [ThiS sulfur-carrier protein]-C-terminal Gly-Gly + 2-[(2R,5Z)-2-carboxy-4-methylthiazol-5(2H)-ylidene]ethyl phosphate + 2 H2O + H(+). It participates in cofactor biosynthesis; thiamine diphosphate biosynthesis. Its function is as follows. Catalyzes the rearrangement of 1-deoxy-D-xylulose 5-phosphate (DXP) to produce the thiazole phosphate moiety of thiamine. Sulfur is provided by the thiocarboxylate moiety of the carrier protein ThiS. In vitro, sulfur can be provided by H(2)S. This Methylococcus capsulatus (strain ATCC 33009 / NCIMB 11132 / Bath) protein is Thiazole synthase.